The sequence spans 152 residues: Protein NrdI (152 aa).

Belongs to the NrdI family.

In terms of biological role, probably involved in ribonucleotide reductase function. This chain is Protein NrdI, found in Mycolicibacterium vanbaalenii (strain DSM 7251 / JCM 13017 / BCRC 16820 / KCTC 9966 / NRRL B-24157 / PYR-1) (Mycobacterium vanbaalenii).